The primary structure comprises 216 residues: Thiamine-phosphate synthase (216 aa).

Residues 41–45 and Asn73 each bind 4-amino-2-methyl-5-(diphosphooxymethyl)pyrimidine; that span reads QYREK. 2 residues coordinate Mg(2+): Asp74 and Asp93. Ser111 is a 4-amino-2-methyl-5-(diphosphooxymethyl)pyrimidine binding site. 137–139 contacts 2-[(2R,5Z)-2-carboxy-4-methylthiazol-5(2H)-ylidene]ethyl phosphate; it reads TTT. A 4-amino-2-methyl-5-(diphosphooxymethyl)pyrimidine-binding site is contributed by Lys140. 2-[(2R,5Z)-2-carboxy-4-methylthiazol-5(2H)-ylidene]ethyl phosphate contacts are provided by residues Gly168 and 188–189; that span reads VS.

The protein belongs to the thiamine-phosphate synthase family. It depends on Mg(2+) as a cofactor.

The enzyme catalyses 2-[(2R,5Z)-2-carboxy-4-methylthiazol-5(2H)-ylidene]ethyl phosphate + 4-amino-2-methyl-5-(diphosphooxymethyl)pyrimidine + 2 H(+) = thiamine phosphate + CO2 + diphosphate. It catalyses the reaction 2-(2-carboxy-4-methylthiazol-5-yl)ethyl phosphate + 4-amino-2-methyl-5-(diphosphooxymethyl)pyrimidine + 2 H(+) = thiamine phosphate + CO2 + diphosphate. It carries out the reaction 4-methyl-5-(2-phosphooxyethyl)-thiazole + 4-amino-2-methyl-5-(diphosphooxymethyl)pyrimidine + H(+) = thiamine phosphate + diphosphate. It functions in the pathway cofactor biosynthesis; thiamine diphosphate biosynthesis; thiamine phosphate from 4-amino-2-methyl-5-diphosphomethylpyrimidine and 4-methyl-5-(2-phosphoethyl)-thiazole: step 1/1. In terms of biological role, condenses 4-methyl-5-(beta-hydroxyethyl)thiazole monophosphate (THZ-P) and 2-methyl-4-amino-5-hydroxymethyl pyrimidine pyrophosphate (HMP-PP) to form thiamine monophosphate (TMP). This is Thiamine-phosphate synthase from Chloroflexus aurantiacus (strain ATCC 29366 / DSM 635 / J-10-fl).